Consider the following 654-residue polypeptide: Translation factor GUF1, mitochondrial (654 aa).

The 181-residue stretch at 57-237 (ENYRNFSIVA…SVIKNIPSPV (181 aa)) folds into the tr-type G domain. GTP-binding positions include 66–73 (AHVDHGKS), 130–134 (DTPGH), and 184–187 (NKID).

This sequence belongs to the TRAFAC class translation factor GTPase superfamily. Classic translation factor GTPase family. LepA subfamily.

It is found in the mitochondrion inner membrane. The catalysed reaction is GTP + H2O = GDP + phosphate + H(+). Functionally, promotes mitochondrial protein synthesis. May act as a fidelity factor of the translation reaction, by catalyzing a one-codon backward translocation of tRNAs on improperly translocated ribosomes. Binds to mitochondrial ribosomes in a GTP-dependent manner. The polypeptide is Translation factor GUF1, mitochondrial (Candida dubliniensis (strain CD36 / ATCC MYA-646 / CBS 7987 / NCPF 3949 / NRRL Y-17841) (Yeast)).